A 103-amino-acid polypeptide reads, in one-letter code: MAKRTQKVGITRKYGTRYGASLRKVVKKFEITQHAKYGCPFCGKVAVKRAAVGIWKCKPCKKIIAGGAWELTTPPAVTAKTTMNRLKKLQEEQAAAAALEKKN.

The protein belongs to the eukaryotic ribosomal protein eL43 family.

The chain is Large ribosomal subunit protein eL43 (RPL37A) from Tetrahymena thermophila (strain SB210).